Here is a 71-residue protein sequence, read N- to C-terminus: Translation initiation factor IF-1 (71 aa).

An S1-like domain is found at 1 to 71 (MKEKNIEMQG…SKGRIIFRSR (71 aa)).

This sequence belongs to the IF-1 family. As to quaternary structure, component of the 30S ribosomal translation pre-initiation complex which assembles on the 30S ribosome in the order IF-2 and IF-3, IF-1 and N-formylmethionyl-tRNA(fMet); mRNA recruitment can occur at any time during PIC assembly.

The protein resides in the cytoplasm. In terms of biological role, one of the essential components for the initiation of protein synthesis. Stabilizes the binding of IF-2 and IF-3 on the 30S subunit to which N-formylmethionyl-tRNA(fMet) subsequently binds. Helps modulate mRNA selection, yielding the 30S pre-initiation complex (PIC). Upon addition of the 50S ribosomal subunit IF-1, IF-2 and IF-3 are released leaving the mature 70S translation initiation complex. In Buchnera aphidicola subsp. Cinara cedri (strain Cc), this protein is Translation initiation factor IF-1.